The chain runs to 143 residues: Putative cytokinin riboside 5'-monophosphate phosphoribohydrolase LOG9 (143 aa).

Substrate contacts are provided by residues 23–24 (RK), 41–47 (RYETMEE), and Thr53.

It belongs to the LOG family.

The catalysed reaction is N(6)-(dimethylallyl)adenosine 5'-phosphate + H2O = N(6)-dimethylallyladenine + D-ribose 5-phosphate. It catalyses the reaction 9-ribosyl-trans-zeatin 5'-phosphate + H2O = trans-zeatin + D-ribose 5-phosphate. Cytokinin-activating enzyme working in the direct activation pathway. Phosphoribohydrolase that converts inactive cytokinin nucleotides to the biologically active free-base forms. The polypeptide is Putative cytokinin riboside 5'-monophosphate phosphoribohydrolase LOG9 (LOG9) (Arabidopsis thaliana (Mouse-ear cress)).